A 440-amino-acid polypeptide reads, in one-letter code: MVSSEVRDLLAQVPNWSQADRPAAFRTIITTITSSPDPSHFAADLKAVTDAIFLESLGVVATRALVIDLIDALKSLASGGPSADSINSTTSSIWLDVGKAIQQHIQSNPTLATSLVDQTATIYEELLAAAHESQNSFTDAAKTLAAIPLDSSQRRVTDKYKADLWIRIIRNYLEDDDATSAETYLNKLKNIIHNVADDNPVLNLHFKLSAARIQDSNRQFLAASQSYYEISLSPAIAEEERLHTLSMAIKCAVLAPAGPPRSRVLARLYKDERSASLEEFGILEKMFLDRLLARAEVEKFAQGLAPHQLATTSDGSTVLAKAMVEHNLLAVSRLYRNIGFDALGSWLGLDSGNKAEEITARMIEQGRLAGSIDQIDRIIYFESGLEASGEKGSGRAEVPVGKEMRRQDGMVQALAEDLERITDDLLVEFPQLVPAGVPGN.

Residues 216–386 form the PCI domain; sequence SNRQFLAASQ…RIIYFESGLE (171 aa).

This sequence belongs to the CSN4 family. In terms of assembly, component of the COP9 signalosome (CSN) complex.

Its subcellular location is the cytoplasm. The protein localises to the nucleus. Its function is as follows. Component of the COP9 signalosome (CSN) complex that acts as an regulator of the ubiquitin (Ubl) conjugation pathway by mediating the deneddylation of the cullin subunit of SCF-type E3 ubiquitin-protein ligase complexes. The CSN complex is involved in the regulation of the circadian clock through its control of the stability of the SCF(FWD1) complex. This Neurospora crassa (strain ATCC 24698 / 74-OR23-1A / CBS 708.71 / DSM 1257 / FGSC 987) protein is COP9 signalosome complex subunit 4 (csn-4).